We begin with the raw amino-acid sequence, 112 residues long: uncharacterized protein (112 aa).

The interval 1-27 (MIASIGDSAEPPLRRTRRAQQQDRPPT) is disordered.

This is an uncharacterized protein from Orgyia pseudotsugata multicapsid polyhedrosis virus (OpMNPV).